The primary structure comprises 775 residues: Chondroitin sulfate synthase 2 (775 aa).

Residues 1 to 15 (MRASLLLSVLRPAGP) lie on the Cytoplasmic side of the membrane. A helical; Signal-anchor for type II membrane protein transmembrane segment spans residues 16–34 (VAVGISLGFTLSLLSVTWV). The Lumenal portion of the chain corresponds to 35–775 (EEPCGPGPPQ…LFEQEQGNST (741 aa)). Residues 37-100 (PCGPGPPQPG…YHPAQPGQAA (64 aa)) form a disordered region. Positions 54–66 (GNTNAARRPNSVQ) are enriched in polar residues. 2 N-linked (GlcNAc...) asparagine glycosylation sites follow: Asn138 and Asn361. Asp617 lines the a divalent metal cation pocket.

This sequence belongs to the chondroitin N-acetylgalactosaminyltransferase family. As to quaternary structure, interacts with PRKN. Mn(2+) serves as cofactor. The cofactor is Co(2+). Ubiquitous. Highly expressed in pancreas, ovary, brain, heart, skeletal muscle, colon, kidney, liver, stomach, spleen and placenta. As to expression, expressed in brain, spleen, ovary, testis, lung and peripheral mononuclear cells. In terms of tissue distribution, also ubiquitous.

Its subcellular location is the golgi apparatus. It is found in the golgi stack membrane. It localises to the cytoplasm. The protein localises to the cytosol. The protein resides in the mitochondrion. Its subcellular location is the mitochondrion matrix. The enzyme catalyses 3-O-(beta-D-GlcA-(1-&gt;3)-beta-D-GalNAc-(1-&gt;4)-beta-D-GlcA-(1-&gt;3)-beta-D-Gal-(1-&gt;3)-beta-D-Gal-(1-&gt;4)-beta-D-Xyl)-L-seryl-[protein] + UDP-N-acetyl-alpha-D-galactosamine = 3-O-(beta-D-GalNAc-(1-&gt;4)-beta-D-GlcA-(1-&gt;3)-beta-D-GalNAc-(1-&gt;4)-beta-D-GlcA-(1-&gt;3)-beta-D-Gal-(1-&gt;3)-beta-D-Gal-(1-&gt;4)-beta-D-Xyl)-L-seryl-[protein] + UDP + H(+). It carries out the reaction 3-O-{beta-D-GlcA-(1-&gt;3)-[beta-D-GalNAc-(1-&gt;4)-beta-D-GlcA-(1-&gt;3)](n)-beta-D-GalNAc-(1-&gt;4)-beta-D-GlcA-(1-&gt;3)-beta-D-Gal-(1-&gt;3)-beta-D-Gal-(1-&gt;4)-beta-D-Xyl}-L-seryl-[protein] + UDP-N-acetyl-alpha-D-galactosamine = 3-O-{[beta-D-GalNAc-(1-&gt;4)-beta-D-GlcA-(1-&gt;3)](n+1)-beta-D-GalNAc-(1-&gt;4)-beta-D-GlcA-(1-&gt;3)-beta-D-Gal-(1-&gt;3)-beta-D-Gal-(1-&gt;4)-beta-D-Xyl}-L-seryl-[protein] + UDP + H(+). It catalyses the reaction 3-O-(beta-D-GalNAc-(1-&gt;4)-beta-D-GlcA-(1-&gt;3)-beta-D-Gal-(1-&gt;3)-beta-D-Gal-(1-&gt;4)-beta-D-Xyl)-L-seryl-[protein] + UDP-alpha-D-glucuronate = 3-O-(beta-D-GlcA-(1-&gt;3)-beta-D-GalNAc-(1-&gt;4)-beta-D-GlcA-(1-&gt;3)-beta-D-Gal-(1-&gt;3)-beta-D-Gal-(1-&gt;4)-beta-D-Xyl)-L-seryl-[protein] + UDP + H(+). The catalysed reaction is 3-O-{[beta-D-GalNAc-(1-&gt;4)-beta-D-GlcA-(1-&gt;3)](n)-beta-D-GalNAc-(1-&gt;4)-beta-D-GlcA-(1-&gt;3)-beta-D-Gal-(1-&gt;3)-beta-D-Gal-(1-&gt;4)-beta-D-Xyl}-L-seryl-[protein] + UDP-alpha-D-glucuronate = 3-O-{beta-D-GlcA-(1-&gt;3)-[beta-D-GalNAc-(1-&gt;4)-beta-D-GlcA-(1-&gt;3)](n)-beta-D-GalNAc-(1-&gt;4)-beta-D-GlcA-(1-&gt;3)-beta-D-Gal-(1-&gt;3)-beta-D-Gal-(1-&gt;4)-beta-D-Xyl}-L-seryl-[protein] + UDP + H(+). In terms of biological role, has both beta-1,3-glucuronic acid and beta-1,4-N-acetylgalactosamine transferase activity. Transfers glucuronic acid (GlcUA) from UDP-GlcUA and N-acetylgalactosamine (GalNAc) from UDP-GalNAc to the non-reducing end of the elongating chondroitin polymer. Seems to act as a specific activating factor for CHSY1 in chondroitin polymerization. Its function is as follows. May facilitate PRKN transport into the mitochondria. In collaboration with PRKN, may enhance cell viability and protect cells from oxidative stress. The polypeptide is Chondroitin sulfate synthase 2 (Homo sapiens (Human)).